We begin with the raw amino-acid sequence, 251 residues long: NLP effector protein Pc129485 (251 aa).

Residues 1 to 19 form the signal peptide; the sequence is MNFRIVLLVLVASLAGAQA. Residues 127–133 carry the Hepta-peptide GHRHDWE motif motif; it reads GHRHNWE. N-linked (GlcNAc...) asparagine glycosylation is found at N146 and N218.

Belongs to the Necrosis inducing protein (NPP1) family.

The protein localises to the secreted. Functionally, secreted effector that contributes strongly to virulence during infection by P.capsici. The polypeptide is NLP effector protein Pc129485 (Phytophthora capsici).